Here is a 117-residue protein sequence, read N- to C-terminus: Histone-like protein Hq1 (117 aa).

Composition is skewed to basic residues over residues 1 to 17 (MPAKKRKTTRQRRRSKA) and 39 to 50 (RKLRAAQKKLAK). The disordered stretch occupies residues 1 to 117 (MPAKKRKTTR…RGRGRPRKKA (117 aa)). Over residues 51 to 68 (AKKDASRKLAKLRKEAAR) the composition is skewed to basic and acidic residues. A compositionally biased stretch (basic residues) spans 71-117 (AAAKKTRAPSKKGRKKATRKKGGGRSRKTARKVSTMKRGRGRPRKKA).

In terms of biological role, binds DNA in vitro. This chain is Histone-like protein Hq1 (hcbA), found in Coxiella burnetii (strain RSA 493 / Nine Mile phase I).